Here is a 525-residue protein sequence, read N- to C-terminus: ATP synthase subunit alpha (525 aa).

171–178 (GDRQTGKS) contacts ATP.

This sequence belongs to the ATPase alpha/beta chains family. F-type ATPases have 2 components, CF(1) - the catalytic core - and CF(0) - the membrane proton channel. CF(1) has five subunits: alpha(3), beta(3), gamma(1), delta(1), epsilon(1). CF(0) has three main subunits: a(1), b(2) and c(9-12). The alpha and beta chains form an alternating ring which encloses part of the gamma chain. CF(1) is attached to CF(0) by a central stalk formed by the gamma and epsilon chains, while a peripheral stalk is formed by the delta and b chains.

It localises to the cell inner membrane. The catalysed reaction is ATP + H2O + 4 H(+)(in) = ADP + phosphate + 5 H(+)(out). Its function is as follows. Produces ATP from ADP in the presence of a proton gradient across the membrane. The alpha chain is a regulatory subunit. This chain is ATP synthase subunit alpha, found in Flavobacterium psychrophilum (strain ATCC 49511 / DSM 21280 / CIP 103535 / JIP02/86).